The sequence spans 412 residues: Argininosuccinate synthase (412 aa).

ATP contacts are provided by residues 12–20 (AYSGGLDTS) and alanine 39. 2 residues coordinate L-citrulline: tyrosine 91 and serine 96. An ATP-binding site is contributed by glycine 121. The L-aspartate site is built by threonine 123, asparagine 127, and aspartate 128. Asparagine 127 serves as a coordination point for L-citrulline. Arginine 131, serine 180, serine 189, glutamate 265, and tyrosine 277 together coordinate L-citrulline.

Belongs to the argininosuccinate synthase family. Type 1 subfamily. As to quaternary structure, homotetramer.

It is found in the cytoplasm. It carries out the reaction L-citrulline + L-aspartate + ATP = 2-(N(omega)-L-arginino)succinate + AMP + diphosphate + H(+). It functions in the pathway amino-acid biosynthesis; L-arginine biosynthesis; L-arginine from L-ornithine and carbamoyl phosphate: step 2/3. The protein is Argininosuccinate synthase of Pseudoalteromonas atlantica (strain T6c / ATCC BAA-1087).